The following is a 657-amino-acid chain: DNA ligase (657 aa).

80–81 (SL) is a binding site for NAD(+). The active-site N6-AMP-lysine intermediate is Lys-104. NAD(+) is bound by residues Arg-125, Glu-159, and Lys-297. The Zn(2+) site is built by Cys-386, Cys-389, Cys-406, and Cys-411. In terms of domain architecture, BRCT spans 571–657 (QSEQIFENLN…EWLNNGVRPE (87 aa)).

This sequence belongs to the NAD-dependent DNA ligase family. LigA subfamily. Mg(2+) is required as a cofactor. Mn(2+) serves as cofactor.

It catalyses the reaction NAD(+) + (deoxyribonucleotide)n-3'-hydroxyl + 5'-phospho-(deoxyribonucleotide)m = (deoxyribonucleotide)n+m + AMP + beta-nicotinamide D-nucleotide.. Its function is as follows. DNA ligase that catalyzes the formation of phosphodiester linkages between 5'-phosphoryl and 3'-hydroxyl groups in double-stranded DNA using NAD as a coenzyme and as the energy source for the reaction. It is essential for DNA replication and repair of damaged DNA. The polypeptide is DNA ligase (Ruminiclostridium cellulolyticum (strain ATCC 35319 / DSM 5812 / JCM 6584 / H10) (Clostridium cellulolyticum)).